A 691-amino-acid chain; its full sequence is DNA-directed RNA polymerase subunit beta' (691 aa).

Cys76, Cys78, Cys94, and Cys97 together coordinate Zn(2+). The Mg(2+) site is built by Asp496, Asp498, and Asp500.

It belongs to the RNA polymerase beta' chain family. RpoC1 subfamily. It depends on Mg(2+) as a cofactor. Zn(2+) is required as a cofactor.

The protein resides in the plastid. It carries out the reaction RNA(n) + a ribonucleoside 5'-triphosphate = RNA(n+1) + diphosphate. In terms of biological role, DNA-dependent RNA polymerase catalyzes the transcription of DNA into RNA using the four ribonucleoside triphosphates as substrates. This Cuscuta exaltata (Tall dodder) protein is DNA-directed RNA polymerase subunit beta'.